Consider the following 253-residue polypeptide: Adenosylcobinamide-GDP ribazoletransferase (253 aa).

4 helical membrane-spanning segments follow: residues 33–53 (ISPI…YLIL), 106–126 (VGSG…VALL), 132–152 (LYTI…SLYI), and 178–198 (ILLL…FIIF).

This sequence belongs to the CobS family. Mg(2+) serves as cofactor.

It is found in the cell membrane. The enzyme catalyses alpha-ribazole + adenosylcob(III)inamide-GDP = adenosylcob(III)alamin + GMP + H(+). It catalyses the reaction alpha-ribazole 5'-phosphate + adenosylcob(III)inamide-GDP = adenosylcob(III)alamin 5'-phosphate + GMP + H(+). It participates in cofactor biosynthesis; adenosylcobalamin biosynthesis; adenosylcobalamin from cob(II)yrinate a,c-diamide: step 7/7. Joins adenosylcobinamide-GDP and alpha-ribazole to generate adenosylcobalamin (Ado-cobalamin). Also synthesizes adenosylcobalamin 5'-phosphate from adenosylcobinamide-GDP and alpha-ribazole 5'-phosphate. This Saccharolobus solfataricus (strain ATCC 35092 / DSM 1617 / JCM 11322 / P2) (Sulfolobus solfataricus) protein is Adenosylcobinamide-GDP ribazoletransferase.